Reading from the N-terminus, the 458-residue chain is Retinoic acid receptor RXR-beta (458 aa).

The span at 1 to 17 (GEAGRDGMGDTGRDSRS) shows a compositional bias: basic and acidic residues. The tract at residues 1 to 105 (GEAGRDGMGD…GGSGPPEDVK (105 aa)) is disordered. The segment at 1–129 (GEAGRDGMGD…PGGPGAGKRL (129 aa)) is modulating. Over residues 18–31 (PDSSSPNPLSQGIP) the composition is skewed to low complexity. Pro residues predominate over residues 32–56 (PSSPPGPPHTPSAPPPPMPPPPLGS). Over residues 57 to 68 (PFPVISSSMGSP) the composition is skewed to low complexity. A compositionally biased stretch (pro residues) spans 69-78 (GLPPPAPPGF). 2 consecutive NR C4-type zinc fingers follow at residues 130 to 150 (CAIC…CEGC) and 166 to 190 (CRDN…YQKC). Positions 130–195 (CAICGDRSSG…RYQKCLATGM (66 aa)) form a DNA-binding region, nuclear receptor. Residues 196–220 (KREAVQEERQRGKDKDGDGDGAGGA) form a hinge region. A compositionally biased stretch (basic and acidic residues) spans 201–213 (QEERQRGKDKDGD). Disordered regions lie at residues 201-223 (QEER…APEE) and 238-261 (QKSD…NDPV). An NR LBD domain is found at 221 to 454 (PEEMPVDRIL…TFLMEMLEAP (234 aa)). Over residues 245–255 (EGPGATGGGGS) the composition is skewed to gly residues.

Belongs to the nuclear hormone receptor family. NR2 subfamily. As to quaternary structure, homodimer (in vitro). Heterodimer with other retinoic acid receptor family members. Binds DNA preferentially as a RAR/RXR heterodimer. Interacts with NR1H3. Interacts with AKAP13. As to expression, expressed in the adrenal gland with main expression in the zona fasciculata (at protein level).

The protein localises to the nucleus. It is found in the cytoplasm. Functionally, receptor for retinoic acid. Retinoic acid receptors bind as heterodimers to their target response elements in response to their ligands, all-trans or 9-cis retinoic acid, and regulate gene expression in various biological processes. The RAR/RXR heterodimers bind to the retinoic acid response elements (RARE). The chain is Retinoic acid receptor RXR-beta (Rxrb) from Rattus norvegicus (Rat).